We begin with the raw amino-acid sequence, 351 residues long: Selenide, water dikinase (351 aa).

Residue selenocysteine 15 is part of the active site. Selenocysteine 15 is a non-standard amino acid (selenocysteine). ATP-binding positions include lysine 18 and 47-49; that span reads DNE. Aspartate 50 contributes to the Mg(2+) binding site. ATP is bound by residues aspartate 67, aspartate 90, and 138–140; that span reads GHS. Residue aspartate 90 coordinates Mg(2+). Aspartate 227 serves as a coordination point for Mg(2+).

The protein belongs to the selenophosphate synthase 1 family. Class I subfamily. Homodimer. Mg(2+) serves as cofactor.

The enzyme catalyses hydrogenselenide + ATP + H2O = selenophosphate + AMP + phosphate + 2 H(+). Functionally, synthesizes selenophosphate from selenide and ATP. The sequence is that of Selenide, water dikinase from Nitratidesulfovibrio vulgaris (strain DP4) (Desulfovibrio vulgaris).